Consider the following 162-residue polypeptide: Protein lon-8 (162 aa).

A signal peptide spans 1 to 23 (MRNSRFCAILAVISAISVSYVLA).

Its subcellular location is the secreted. In terms of biological role, secreted protein that is involved in larval elongation, early adult growth and male tail development. This chain is Protein lon-8, found in Caenorhabditis elegans.